We begin with the raw amino-acid sequence, 154 residues long: Large ribosomal subunit protein uL13 (154 aa).

The protein belongs to the universal ribosomal protein uL13 family. Part of the 50S ribosomal subunit.

Functionally, this protein is one of the early assembly proteins of the 50S ribosomal subunit, although it is not seen to bind rRNA by itself. It is important during the early stages of 50S assembly. The sequence is that of Large ribosomal subunit protein uL13 from Sinorhizobium medicae (strain WSM419) (Ensifer medicae).